Here is a 299-residue protein sequence, read N- to C-terminus: Epimerase family protein SERP0438 (299 aa).

This sequence belongs to the NAD(P)-dependent epimerase/dehydratase family. SDR39U1 subfamily.

The chain is Epimerase family protein SERP0438 from Staphylococcus epidermidis (strain ATCC 35984 / DSM 28319 / BCRC 17069 / CCUG 31568 / BM 3577 / RP62A).